Here is a 912-residue protein sequence, read N- to C-terminus: MADDKSLLARFYHADRALTAVASELDSFDGRAEPVRCTRLVGRLRQGQDRVLAITNQIMDELLGDDRAPRAFRAKFPEEVLQESLAGQLWFGAECLAAGSSIMNREVESGVMRPLAKAVTKSLDNVRNLLREQCLRNNTPNSLTLRLDINDAATEQLYESLKIFDRLFAEFELLYVSAMVQVKSKQEYEMQELICVLFSETLQRALKIGLLEQEQVDSYDPALMFSIPRLAIVAGLVIFKDGPLNMDQPADNISEMFRPFRKLLIKMRDLLRTLTKHELYQLEKLLCTNEEISLKEELICDANENDSSDVLPQEDHVVIVTTNVNTSNNSDNSDSRVDDSPNDELRHESETRDNRNSSFYSNRIIDSNRLHADVEDDVSENDDDDDPSNVLKDSLVTTDCASGYLIPNTNFGNLLQTNEAPLTDSFIATDEELKLGTSSNARIEQILSETNQKLADSGLGTANPSVDNSPELDTERPITSRSACESSEEGEIDEYDNEEDDEDSDNNLSNQQLMDPGSSAGTSQSAGKPYRTHKQQHHHRHRRSSGSIMSATSSRKYNSKHHKASASASVIVPSNQGTSSKTYSNCDTSPSSGNQSECSSTSSTTGESSQDVAMAIRAAGRIKFKTTENLLHRLFVCIAGVADQLQTNFAADLRQMLKSVFIINSSPPEPEEPPELAPTSSDKPKEPDPTDLFEFRASEQDVITPGQNSGGSSQSIYSAEEVNPEDPHDSVFGSPGTSPIRASSAPRTMMTTAESGGVTVNVSVSVVTGGGSSSSRNVQERSVSLSETSIVVENNGGATDSNLRDSHRRHSAIGSKGEYGRSRSSPNSPVNGTSAEERRMPEAPPRWIPDGDAPRCMACASSFTPFRRRHHCRNCGGVFCGVCSSASAPLPKYGLTKAVRVCRDCYVREVGT.

Positions 323-332 (NVNTSNNSDN) are enriched in low complexity. Disordered stretches follow at residues 323–360 (NVNTSNNSDNSDSRVDDSPNDELRHESETRDNRNSSFY), 455–610 (ADSG…ESSQ), 664–745 (NSSP…ASSA), and 769–846 (GGGS…APPR). A compositionally biased stretch (basic and acidic residues) spans 333–355 (SDSRVDDSPNDELRHESETRDNR). Positions 455 to 468 (ADSGLGTANPSVDN) are enriched in polar residues. Acidic residues predominate over residues 486-505 (SSEEGEIDEYDNEEDDEDSD). A compositionally biased stretch (basic residues) spans 530–544 (YRTHKQQHHHRHRRS). Composition is skewed to polar residues over residues 545 to 556 (SGSIMSATSSRK) and 572 to 590 (VPSNQGTSSKTYSNCDTSP). Over residues 591-610 (SSGNQSECSSTSSTTGESSQ) the composition is skewed to low complexity. Residues 682–699 (DKPKEPDPTDLFEFRASE) show a composition bias toward basic and acidic residues. Polar residues-rich tracts occupy residues 705–717 (PGQNSGGSSQSIY), 735–745 (PGTSPIRASSA), 780–801 (ERSVSLSETSIVVENNGGATDS), and 822–834 (SRSSPNSPVNGTS). The FYVE-type zinc-finger motif lies at 850 to 910 (DGDAPRCMAC…VCRDCYVREV (61 aa)). 8 residues coordinate Zn(2+): Cys856, Cys859, Cys872, Cys875, Cys880, Cys883, Cys902, and Cys905.

It belongs to the lst-2 family.

Its function is as follows. Negative regulator of epidermal growth factor receptor (EGFR) signaling. The polypeptide is Lateral signaling target protein 2 homolog (Aedes aegypti (Yellowfever mosquito)).